The primary structure comprises 134 residues: CDGSH iron-sulfur domain-containing protein 2 homolog (134 aa).

At 1 to 35 (MESLSHLVKSTLPNYLSNLPVPDTLGGWFKLSFKD) the chain is on the lumenal side. The chain crosses the membrane as a helical span at residues 36–58 (WLALIPPTVVVAGIGYTGYLAFC). Over 59-134 (PAAQDRCSAK…DNVGPVVVKK (76 aa)) the chain is Cytoplasmic. [2Fe-2S] cluster contacts are provided by Cys-101, Cys-103, Cys-112, and His-116.

The protein belongs to the CISD protein family. CISD2 subfamily. [2Fe-2S] cluster is required as a cofactor.

It localises to the endoplasmic reticulum membrane. This Drosophila willistoni (Fruit fly) protein is CDGSH iron-sulfur domain-containing protein 2 homolog.